The chain runs to 353 residues: Fe(3+) ions import ATP-binding protein FbpC (353 aa).

Residues 9–239 enclose the ABC transporter domain; the sequence is VVFENVRKTF…PASSFIADFM (231 aa). 41-48 lines the ATP pocket; the sequence is GPSGCGKT.

It belongs to the ABC transporter superfamily. Fe(3+) ion importer (TC 3.A.1.10) family. In terms of assembly, the complex is composed of two ATP-binding proteins (FbpC), two transmembrane proteins (FbpB) and a solute-binding protein (FbpA).

The protein localises to the cell inner membrane. The catalysed reaction is Fe(3+)(out) + ATP + H2O = Fe(3+)(in) + ADP + phosphate + H(+). Part of the ABC transporter complex FbpABC involved in Fe(3+) ions import. Responsible for energy coupling to the transport system. This chain is Fe(3+) ions import ATP-binding protein FbpC, found in Agrobacterium fabrum (strain C58 / ATCC 33970) (Agrobacterium tumefaciens (strain C58)).